Reading from the N-terminus, the 592-residue chain is NADH-quinone oxidoreductase subunit C/D (592 aa).

Residues 1 to 183 (MLTEFNSIPA…GPYILTEEKE (183 aa)) are NADH dehydrogenase I subunit C. Residues 207–592 (DFMFLNLGPN…IDFVMADVDR (386 aa)) are NADH dehydrogenase I subunit D.

In the N-terminal section; belongs to the complex I 30 kDa subunit family. The protein in the C-terminal section; belongs to the complex I 49 kDa subunit family. NDH-1 is composed of 13 different subunits. Subunits NuoB, CD, E, F, and G constitute the peripheral sector of the complex.

It is found in the cell inner membrane. The catalysed reaction is a quinone + NADH + 5 H(+)(in) = a quinol + NAD(+) + 4 H(+)(out). Its function is as follows. NDH-1 shuttles electrons from NADH, via FMN and iron-sulfur (Fe-S) centers, to quinones in the respiratory chain. The immediate electron acceptor for the enzyme in this species is believed to be ubiquinone. Couples the redox reaction to proton translocation (for every two electrons transferred, four hydrogen ions are translocated across the cytoplasmic membrane), and thus conserves the redox energy in a proton gradient. The sequence is that of NADH-quinone oxidoreductase subunit C/D from Acidiphilium cryptum (strain JF-5).